The sequence spans 553 residues: HTH-type transcriptional regulator SgrR (553 aa).

Residues 1–113 (MSTSRLQQQF…RQMLLSQLGR (113 aa)) form the HTH marR-type domain. Positions 26–49 (LQALAEVLNCSRRHVRSLLGKMQH) form a DNA-binding region, H-T-H motif. Residues 163–494 (ELEPDLSHHW…EELHQDIESW (332 aa)) are solute-binding.

Its function is as follows. Activates the small RNA gene sgrS under glucose-phosphate stress conditions as well as yfdZ. Represses its own transcription under both stress and non-stress conditions. Might act as a sensor of the intracellular accumulation of phosphoglucose by binding these molecules in its C-terminal solute-binding domain. The chain is HTH-type transcriptional regulator SgrR from Yersinia pestis bv. Antiqua (strain Antiqua).